The sequence spans 317 residues: DNA-directed RNA polymerase subunit alpha (317 aa).

The alpha N-terminal domain (alpha-NTD) stretch occupies residues 1–229 (MLNEFIYPDK…KHYELLENIF (229 aa)). The alpha C-terminal domain (alpha-CTD) stretch occupies residues 245–317 (AEKLSLSIEE…ELGMNIETQR (73 aa)).

It belongs to the RNA polymerase alpha chain family. Homodimer. The RNAP catalytic core consists of 2 alpha, 1 beta, 1 beta' and 1 omega subunit. When a sigma factor is associated with the core the holoenzyme is formed, which can initiate transcription.

It catalyses the reaction RNA(n) + a ribonucleoside 5'-triphosphate = RNA(n+1) + diphosphate. In terms of biological role, DNA-dependent RNA polymerase catalyzes the transcription of DNA into RNA using the four ribonucleoside triphosphates as substrates. The protein is DNA-directed RNA polymerase subunit alpha of Aquifex aeolicus (strain VF5).